We begin with the raw amino-acid sequence, 166 residues long: Shikimate kinase (166 aa).

ATP is bound at residue Gly11–Thr16. Ser15 contributes to the Mg(2+) binding site. Asp33, Arg57, and Gly79 together coordinate substrate. Arg117 contributes to the ATP binding site. Residue Arg134 coordinates substrate.

This sequence belongs to the shikimate kinase family. As to quaternary structure, monomer. The cofactor is Mg(2+).

It localises to the cytoplasm. The catalysed reaction is shikimate + ATP = 3-phosphoshikimate + ADP + H(+). It functions in the pathway metabolic intermediate biosynthesis; chorismate biosynthesis; chorismate from D-erythrose 4-phosphate and phosphoenolpyruvate: step 5/7. Its function is as follows. Catalyzes the specific phosphorylation of the 3-hydroxyl group of shikimic acid using ATP as a cosubstrate. The chain is Shikimate kinase from Sulfurihydrogenibium sp. (strain YO3AOP1).